We begin with the raw amino-acid sequence, 72 residues long: uncharacterized protein (72 aa).

Positions 1–53 are disordered; the sequence is MTNEPSTSTPTSTSTSTSTSTSTSTTTLTSTSSTPTSTSTSTSTSTSTSTSTS.

This is an uncharacterized protein from Dictyostelium discoideum (Social amoeba).